A 419-amino-acid polypeptide reads, in one-letter code: UDP-N-acetylglucosamine 1-carboxyvinyltransferase (419 aa).

Lys-22–Asn-23 provides a ligand contact to phosphoenolpyruvate. Position 93 (Arg-93) interacts with UDP-N-acetyl-alpha-D-glucosamine. Cys-117 acts as the Proton donor in catalysis. At Cys-117 the chain carries 2-(S-cysteinyl)pyruvic acid O-phosphothioketal. UDP-N-acetyl-alpha-D-glucosamine contacts are provided by Asp-306 and Ile-328.

This sequence belongs to the EPSP synthase family. MurA subfamily.

The protein localises to the cytoplasm. It carries out the reaction phosphoenolpyruvate + UDP-N-acetyl-alpha-D-glucosamine = UDP-N-acetyl-3-O-(1-carboxyvinyl)-alpha-D-glucosamine + phosphate. It functions in the pathway cell wall biogenesis; peptidoglycan biosynthesis. Cell wall formation. Adds enolpyruvyl to UDP-N-acetylglucosamine. The polypeptide is UDP-N-acetylglucosamine 1-carboxyvinyltransferase (Magnetococcus marinus (strain ATCC BAA-1437 / JCM 17883 / MC-1)).